The sequence spans 345 residues: Transcriptional activator hacA (345 aa).

The interval 1–106 (MSCDMEKTMS…AQTSRERKRL (106 aa)) is disordered. The segment covering 30-40 (PADTSLNSADV) has biased composition (polar residues). 2 stretches are compositionally biased toward basic and acidic residues: residues 41–51 (KTQEVKPEEKK) and 77–91 (KTEDEKEQRRIERVL). The bZIP domain maps to 83 to 146 (EQRRIERVLR…NRLSQQLAQL (64 aa)). Positions 85 to 138 (RRIERVLRNRAAAQTSRERKRLEMEKLENEKIQMEQQNQFLLQRLSQMEAENNR) are basic motif. The leucine-zipper stretch occupies residues 139-146 (LSQQLAQL). The interval 186 to 210 (RIPFPTPSLSDYSPTLKPSTLAESS) is disordered. Over residues 192–210 (PSLSDYSPTLKPSTLAESS) the composition is skewed to polar residues.

The protein belongs to the bZIP family. As to quaternary structure, homodimer.

Its subcellular location is the nucleus. Its function is as follows. Transcriptional activator involved in the unfolded protein response (UPR) pathway. Recognizes and binds to the UPR element (UPRE) in the promoter of UPR-regulated genes. Increases the synthesis of endoplasmic reticulum-resident proteins required for protein folding as well as components of the secretory pathway. The sequence is that of Transcriptional activator hacA (hacA) from Aspergillus oryzae (strain ATCC 42149 / RIB 40) (Yellow koji mold).